Reading from the N-terminus, the 311-residue chain is Methionyl-tRNA formyltransferase (311 aa).

110–113 (SLLP) contacts (6S)-5,6,7,8-tetrahydrofolate.

This sequence belongs to the Fmt family.

It catalyses the reaction L-methionyl-tRNA(fMet) + (6R)-10-formyltetrahydrofolate = N-formyl-L-methionyl-tRNA(fMet) + (6S)-5,6,7,8-tetrahydrofolate + H(+). Attaches a formyl group to the free amino group of methionyl-tRNA(fMet). The formyl group appears to play a dual role in the initiator identity of N-formylmethionyl-tRNA by promoting its recognition by IF2 and preventing the misappropriation of this tRNA by the elongation apparatus. The chain is Methionyl-tRNA formyltransferase from Streptococcus uberis (strain ATCC BAA-854 / 0140J).